A 333-amino-acid chain; its full sequence is MTDTTKNDKYNLKLIDSMQKEAPYDKVWNLAWHPNGEILATCANDKYIQIWSKDTNGKWGLVQSLEGHEKTVRRVAWSPCGRFLAGASFDASTSIWEKSKDELEFTHVSSLEGHTYEVKSVAWDSTGTLLATCSRDKSIWIWQMEDDNDFECLSINSGHGQDIKCVLWHPNEELLASSSYDDTIKFWKDIDGDWECINTLTGHESSIWDLAFNKDGDKLVSCGEDKLVLFWKFDKENEKWINIFKFKNENSRPIYSIDWSSLTNTIVTGSADDSIIFYEQESDDTPDKYKIILKKKNAHDSDVNCTKWNPKFKNILASCGDDGFIKIWELQDK.

WD repeat units follow at residues 22–61 (APYDKVWNLAWHPNGEILATCANDKYIQIWSKDTNGKWGL), 67–106 (GHEKTVRRVAWSPCGRFLAGASFDASTSIWEKSKDELEFT), 113–152 (GHTYEVKSVAWDSTGTLLATCSRDKSIWIWQMEDDNDFEC), 158–197 (GHGQDIKCVLWHPNEELLASSSYDDTIKFWKDIDGDWECI), 202–241 (GHESSIWDLAFNKDGDKLVSCGEDKLVLFWKFDKENEKWI), 249–288 (ENSRPIYSIDWSSLTNTIVTGSADDSIIFYEQESDDTPDK), and 298–333 (AHDSDVNCTKWNPKFKNILASCGDDGFIKIWELQDK).

It belongs to the WD repeat CIA1 family.

Its function is as follows. Essential component of the cytosolic iron-sulfur (Fe/S) protein assembly machinery. Required for the maturation of extramitochondrial Fe/S proteins. In Dictyostelium discoideum (Social amoeba), this protein is Probable cytosolic iron-sulfur protein assembly protein CIAO1 homolog (ciao1).